The following is a 202-amino-acid chain: Response regulator RamR (202 aa).

Positions 1–121 (MGEMVRIAVV…LITAVHTVAR (121 aa)) are response regulatory. The HTH luxR-type domain occupies 135–200 (LKGAEMPLTT…DAIRIVQSAG (66 aa)). A DNA-binding region (H-T-H motif) is located at residues 159–178 (IAEIAARLHLSRGTVRNYMA).

In terms of assembly, homodimer, in the absence of phosphorylation. Post-translationally, may be phosphorylated by an unknown kinase, probably on Asp-56.

In terms of biological role, a transcription factor required for aerial hyphae formation on rich medium. Activates transcription of ramC. Might be part of a two-component regulatory system. Binds the promoter of ramC. Non-phosphorylated protein cooperatively binds multiple sites in the ramC promoter. Has not been seen to autophosphorylate using the small molecule phosphodonors phosphoramidate, acetyl phosphate or carbamoyl phosphate. Upon low expression suppresses the bald (bld, no aerial hyphae) phenotype of citA but not bldJ mutants; higher expression also suppresses the bldJ mutant as well as several other bld mutations, inducing SapB production even on media where SapB is normally not produced. Expression of the ram locus (ramA, ramB and ramR) induces rapid aerial mycelium formation in S.lividans. Overexpression suppresses the no aerial hyphae phenotype of a chaplin-negative strain, probably by inducing expression of SapB. Overexpression of RamR show there are about 280 genes having at least a threefold increase or fourfold decrease in RNA abundance versus wild-type including gene cluster SCO4072-SCO4075. The protein is Response regulator RamR of Streptomyces coelicolor (strain ATCC BAA-471 / A3(2) / M145).